Here is a 135-residue protein sequence, read N- to C-terminus: Centromere protein S (135 aa).

The interval 103-135 (SLEQKEKKKKKSVSGGNVSRNSDMDTVVPESKD) is disordered.

It belongs to the TAF9 family. CENP-S/MHF1 subfamily. Heterodimer with CENPX, sometimes called MHF; this interaction stabilizes both partners. MHF heterodimers can assemble to form tetrameric structures. MHF also coassemble with CENPT-CENPW heterodimers at centromeres to form the tetrameric CENP-T-W-S-X complex. Forms a discrete complex with FANCM and CENPX, called FANCM-MHF; this interaction, probably mediated by direct binding between CENPS and FANCM, leads to synergistic activation of double-stranded DNA binding and strongly stimulates FANCM-mediated DNA remodeling. Recruited by FANCM to the Fanconi anemia (FA) core complex, which consists of CENPS, CENPX, FANCA, FANCB, FANCC, FANCE, FANCF, FANCG, FANCL, FANCM, FAAP24 and FAAP100. The FA core complex associates with Bloom syndrome (BLM) complex, which consists of at least BLM, DNA topoisomerase 3-alpha (TOP3A), RMI1/BLAP75, RPA1/RPA70 and RPA2/RPA32. The super complex between FA and BLM is called BRAFT. Component of the CENPA-CAD complex, composed of CENPI, CENPK, CENPL, CENPO, CENPP, CENPQ, CENPR and CENPS. The CENPA-CAD complex is probably recruited on centromeres by the CENPA-NAC complex, at least composed of CENPA, CENPC, CENPH, CENPM, CENPN, CENPT and CENPU.

The protein resides in the nucleus. The protein localises to the chromosome. It is found in the centromere. It localises to the kinetochore. Functionally, DNA-binding component of the Fanconi anemia (FA) core complex. Required for the normal activation of the FA pathway, leading to monoubiquitination of the FANCI-FANCD2 complex in response to DNA damage, cellular resistance to DNA cross-linking drugs, and prevention of chromosomal breakage. In complex with CENPX (MHF heterodimer), crucial cofactor for FANCM in both binding and ATP-dependent remodeling of DNA. Stabilizes FANCM. In complex with CENPX and FANCM (but not other FANC proteins), rapidly recruited to blocked forks and promotes gene conversion at blocked replication forks. In complex with CENPT, CENPW and CENPX (CENP-T-W-S-X heterotetramer), involved in the formation of a functional kinetochore outer plate, which is essential for kinetochore-microtubule attachment and faithful mitotic progression. As a component of MHF and CENP-T-W-S-X complexes, binds DNA and bends it to form a nucleosome-like structure. DNA-binding function is fulfilled in the presence of CENPX, with the following preference for DNA substates: Holliday junction &gt; double-stranded &gt; splay arm &gt; single-stranded. Does not bind DNA on its own. This chain is Centromere protein S (cenps), found in Xenopus laevis (African clawed frog).